The primary structure comprises 381 residues: Choline transport ATP-binding protein OpuBA (381 aa).

The region spanning 2–236 (LTLENVSKTY…PADEFVEEFI (235 aa)) is the ABC transporter domain. ATP is bound at residue 35 to 42 (GPSGCGKT). 2 CBS domains span residues 256–314 (MNTQ…LVSE) and 316–374 (LHED…WGEE).

Belongs to the ABC transporter superfamily.

Its function is as follows. Involved in a high affinity multicomponent binding-protein-dependent transport system for choline. Probably responsible for energy coupling to the transport system. The polypeptide is Choline transport ATP-binding protein OpuBA (opuBA) (Bacillus subtilis (strain 168)).